The primary structure comprises 216 residues: Peptide methionine sulfoxide reductase MsrA (216 aa).

Cys54 is a catalytic residue.

This sequence belongs to the MsrA Met sulfoxide reductase family.

The catalysed reaction is L-methionyl-[protein] + [thioredoxin]-disulfide + H2O = L-methionyl-(S)-S-oxide-[protein] + [thioredoxin]-dithiol. The enzyme catalyses [thioredoxin]-disulfide + L-methionine + H2O = L-methionine (S)-S-oxide + [thioredoxin]-dithiol. In terms of biological role, has an important function as a repair enzyme for proteins that have been inactivated by oxidation. Catalyzes the reversible oxidation-reduction of methionine sulfoxide in proteins to methionine. The protein is Peptide methionine sulfoxide reductase MsrA of Xanthomonas campestris pv. campestris (strain ATCC 33913 / DSM 3586 / NCPPB 528 / LMG 568 / P 25).